Reading from the N-terminus, the 401-residue chain is Argininosuccinate synthase (401 aa).

ATP-binding positions include 11-19 and alanine 38; that span reads AYSGGLDTS. Residues tyrosine 89 and serine 94 each coordinate L-citrulline. Position 119 (glycine 119) interacts with ATP. Positions 121, 125, and 126 each coordinate L-aspartate. Asparagine 125 lines the L-citrulline pocket. Residues arginine 129, serine 180, serine 189, glutamate 265, and tyrosine 277 each coordinate L-citrulline.

Belongs to the argininosuccinate synthase family. Type 1 subfamily. As to quaternary structure, homotetramer.

The protein localises to the cytoplasm. It catalyses the reaction L-citrulline + L-aspartate + ATP = 2-(N(omega)-L-arginino)succinate + AMP + diphosphate + H(+). It functions in the pathway amino-acid biosynthesis; L-arginine biosynthesis; L-arginine from L-ornithine and carbamoyl phosphate: step 2/3. This Syntrophus aciditrophicus (strain SB) protein is Argininosuccinate synthase.